We begin with the raw amino-acid sequence, 344 residues long: Tryptophan--tRNA ligase (344 aa).

ATP is bound by residues 20 to 22 and 28 to 29; these read QPS and GN. The 'HIGH' region signature appears at 21–29; it reads PSGALHLGN. Asp-144 contacts L-tryptophan. ATP is bound by residues 156–158, Val-197, and 206–210; these read GED and KMSKS. A 'KMSKS' region motif is present at residues 206–210; it reads KMSKS.

The protein belongs to the class-I aminoacyl-tRNA synthetase family. In terms of assembly, homodimer.

Its subcellular location is the cytoplasm. It catalyses the reaction tRNA(Trp) + L-tryptophan + ATP = L-tryptophyl-tRNA(Trp) + AMP + diphosphate + H(+). Catalyzes the attachment of tryptophan to tRNA(Trp). This is Tryptophan--tRNA ligase from Caulobacter vibrioides (strain ATCC 19089 / CIP 103742 / CB 15) (Caulobacter crescentus).